We begin with the raw amino-acid sequence, 448 residues long: Fibulin-5 (448 aa).

The first 23 residues, 1–23 (MPGLKRILTVTILALWLPHPGNA), serve as a signal peptide directing secretion. An EGF-like 1; calcium-binding domain is found at 42–82 (DIDECRTIPEACRGDMMCVNQNGGYLCIPRTNPVYRGPYSN). 17 cysteine pairs are disulfide-bonded: cysteine 46–cysteine 59, cysteine 53–cysteine 68, cysteine 131–cysteine 144, cysteine 138–cysteine 153, cysteine 155–cysteine 166, cysteine 172–cysteine 181, cysteine 177–cysteine 190, cysteine 192–cysteine 205, cysteine 211–cysteine 221, cysteine 217–cysteine 230, cysteine 232–cysteine 245, cysteine 251–cysteine 262, cysteine 258–cysteine 271, cysteine 273–cysteine 286, cysteine 292–cysteine 305, cysteine 299–cysteine 314, and cysteine 320–cysteine 332. The short motif at 54-56 (RGD) is the Cell attachment site element. Residues 127-167 (DVDECATDSHQCNPTQICINTEGGYTCSCTDGYWLLEGQCL) form the EGF-like 2; calcium-binding domain. The EGF-like 3; calcium-binding domain occupies 168–206 (DIDECRYGYCQQLCANVPGSYSCTCNPGFTLNDDGRSCQ). Positions 207–246 (DVNECETENPCVQTCVNTYGSFICRCDPGYELEEDGIHCS) constitute an EGF-like 4; calcium-binding domain. The interaction with LOXL1 stretch occupies residues 245–448 (CSDMDECSFS…LRIYVSQYPF (204 aa)). In terms of domain architecture, EGF-like 5; calcium-binding spans 247–287 (DMDECSFSEFLCQHECVNQPGSYFCSCPPGYVLLDDNRSCQ). N-linked (GlcNAc...) asparagine glycosylation is found at asparagine 283 and asparagine 296. One can recognise an EGF-like 6; calcium-binding domain in the interval 288–333 (DINECEHRNHTCTSLQTCYNLQGGFKCIDPISCEEPYLLIGENRCM).

This sequence belongs to the fibulin family. In terms of assembly, homodimer. Monomer, homodimerizes in presence of Ca(2+). Interacts with ELN. Interacts (via N-terminus) with the integrins ITGAV/ITGB3, ITGAV/ITGB5 and ITGA9/ITGB1. Interacts with FBN1 (via N-terminal domain). Forms a ternary complex with ELN and FBN1. Interacts with EFEMP2 with moderate affinity. Interacts with LOXL1. N-glycosylated.

Its subcellular location is the secreted. The protein resides in the extracellular space. The protein localises to the extracellular matrix. In terms of biological role, essential for elastic fiber formation, is involved in the assembly of continuous elastin (ELN) polymer and promotes the interaction of microfibrils and ELN. Stabilizes and organizes elastic fibers in the skin, lung and vasculature. Promotes adhesion of endothelial cells through interaction of integrins and the RGD motif. Vascular ligand for integrin receptors which may play a role in vascular development and remodeling. May act as an adapter that mediates the interaction between FBN1 and ELN. The polypeptide is Fibulin-5 (Fbln5) (Mus musculus (Mouse)).